The chain runs to 110 residues: Parvalbumin alpha (110 aa).

The residue at position 2 (serine 2) is an N-acetylserine. Phosphoserine is present on residues serine 2 and serine 24. EF-hand domains lie at lysine 39–aspartate 74 and leucine 78–serine 110. The Ca(2+) site is built by aspartate 52, aspartate 54, serine 56, phenylalanine 58, glutamate 60, glutamate 63, aspartate 91, aspartate 93, aspartate 95, lysine 97, and glutamate 102.

The protein belongs to the parvalbumin family.

In terms of biological role, in muscle, parvalbumin is thought to be involved in relaxation after contraction. It binds two calcium ions. The protein is Parvalbumin alpha (PVALB) of Bos taurus (Bovine).